A 195-amino-acid polypeptide reads, in one-letter code: MALLPSLLTALVVYELWPCGALGCDLPQNHILVSRKNFVLLGQMSRISSAICLKDRKDFRFPQDMADGRQFPEAQAASVLHEMLQQIFSLFHTERSSAAWNTTLLDELCTGLLRQLEDLDTCLEQEMGEEESALGTVRPTLAVKRYFRGIHLYLKEKKYSDCAWEIVRMEIMRSFSSSANLQGRLRMKDGDLGSP.

The N-terminal stretch at 1-23 (MALLPSLLTALVVYELWPCGALG) is a signal peptide. Disulfide bonds link cysteine 24–cysteine 122 and cysteine 52–cysteine 162. N-linked (GlcNAc...) asparagine glycosylation is present at asparagine 101.

This sequence belongs to the alpha/beta interferon family.

It localises to the secreted. This Equus caballus (Horse) protein is Interferon omega-2.